We begin with the raw amino-acid sequence, 88 residues long: MRLFLSLPVLVVVLAMVWEGPAPTQAAPEISSTLGRIPDKLKEFGNTLEDKARAAIDSIKQSDIPAKTRNWFSETFNKVKEQLKTAFS.

An N-terminal signal peptide occupies residues 1 to 26; sequence MRLFLSLPVLVVVLAMVWEGPAPTQA.

It belongs to the apolipoprotein C1 family.

Its subcellular location is the secreted. Inhibitor of lipoprotein binding to the low density lipoprotein (LDL) receptor, LDL receptor-related protein, and very low density lipoprotein (VLDL) receptor. Associates with high density lipoproteins (HDL) and the triacylglycerol-rich lipoproteins in the plasma and makes up about 10% of the protein of the VLDL and 2% of that of HDL. Appears to interfere directly with fatty acid uptake and is also the major plasma inhibitor of cholesteryl ester transfer protein (CETP). Binds free fatty acids and reduces their intracellular esterification. Modulates the interaction of APOE with beta-migrating VLDL and inhibits binding of beta-VLDL to the LDL receptor-related protein. The protein is Apolipoprotein C-I (APOC1) of Neomonachus schauinslandi (Hawaiian monk seal).